We begin with the raw amino-acid sequence, 281 residues long: MEANTRSTGRLPAAFLTPGSSSFMDFLSEHQPEILPGNRQLPPTQGVIEAPHGTTIVATTFPGGVVLAGDRRATMGNVIAQRDIEKVFPADEYSAVGIAGTAGLAVEMVKLFQLELEHFEKVEGATLSLEGKANRLSTMIRSNLAMAMQGLAVVPLFAGYDVDREKGRIFSYDVTGGRSEEHGYASTGSGSIFARGAMKKLYRDDLTEQQATTLVIQALYDAADDDSATGGPDVARRIYPIVTVITEDGFRRLTDEESSEIARAILERRLEQPDGPRAALL.

The propeptide at methionine 1–glycine 53 is removed in mature form; by autocatalysis. Threonine 54 serves as the catalytic Nucleophile.

The protein belongs to the peptidase T1B family. In terms of assembly, the 20S proteasome core is composed of 14 alpha and 14 beta subunits that assemble into four stacked heptameric rings, resulting in a barrel-shaped structure. The two inner rings, each composed of seven catalytic beta subunits, are sandwiched by two outer rings, each composed of seven alpha subunits. The catalytic chamber with the active sites is on the inside of the barrel. Has a gated structure, the ends of the cylinder being occluded by the N-termini of the alpha-subunits. Is capped by the proteasome-associated ATPase, ARC.

Its subcellular location is the cytoplasm. The catalysed reaction is Cleavage of peptide bonds with very broad specificity.. Its pathway is protein degradation; proteasomal Pup-dependent pathway. With respect to regulation, the formation of the proteasomal ATPase ARC-20S proteasome complex, likely via the docking of the C-termini of ARC into the intersubunit pockets in the alpha-rings, may trigger opening of the gate for substrate entry. Interconversion between the open-gate and close-gate conformations leads to a dynamic regulation of the 20S proteasome proteolysis activity. Functionally, component of the proteasome core, a large protease complex with broad specificity involved in protein degradation. The sequence is that of Proteasome subunit beta 2 from Streptomyces avermitilis (strain ATCC 31267 / DSM 46492 / JCM 5070 / NBRC 14893 / NCIMB 12804 / NRRL 8165 / MA-4680).